Here is a 324-residue protein sequence, read N- to C-terminus: Quinolinate synthase (324 aa).

2 residues coordinate iminosuccinate: His39 and Ser56. Cys101 serves as a coordination point for [4Fe-4S] cluster. Iminosuccinate is bound by residues 127 to 129 (YIN) and Ser144. Position 187 (Cys187) interacts with [4Fe-4S] cluster. Iminosuccinate is bound by residues 213–215 (HPE) and Thr230. Cys280 serves as a coordination point for [4Fe-4S] cluster.

Belongs to the quinolinate synthase family. Type 2 subfamily. The cofactor is [4Fe-4S] cluster.

It is found in the cytoplasm. It carries out the reaction iminosuccinate + dihydroxyacetone phosphate = quinolinate + phosphate + 2 H2O + H(+). Its pathway is cofactor biosynthesis; NAD(+) biosynthesis; quinolinate from iminoaspartate: step 1/1. Functionally, catalyzes the condensation of iminoaspartate with dihydroxyacetone phosphate to form quinolinate. This chain is Quinolinate synthase, found in Nostoc punctiforme (strain ATCC 29133 / PCC 73102).